The primary structure comprises 525 residues: Protein MGF 505-6R (525 aa).

ANK repeat units lie at residues Ser54–Tyr83, Ala129–Val158, Asn261–Thr291, and Lys324–Asp351.

The protein belongs to the asfivirus MGF 505 family.

Functionally, plays a role in virus cell tropism, and may be required for efficient virus replication in macrophages. This is Protein MGF 505-6R from Ornithodoros (relapsing fever ticks).